The sequence spans 348 residues: Dihydroorotase (348 aa).

His-17 and His-19 together coordinate Zn(2+). Substrate-binding positions include 19-21 (HLR) and Asn-45. Zn(2+)-binding residues include Lys-103, His-140, and His-178. An N6-carboxylysine modification is found at Lys-103. Position 140 (His-140) interacts with substrate. Position 223 (Leu-223) interacts with substrate. Residue Asp-251 coordinates Zn(2+). Asp-251 is an active-site residue. Positions 255 and 267 each coordinate substrate.

This sequence belongs to the metallo-dependent hydrolases superfamily. DHOase family. Class II DHOase subfamily. As to quaternary structure, homodimer. The cofactor is Zn(2+). It depends on Co(2+) as a cofactor. Requires Mg(2+) as cofactor. Ni(2+) is required as a cofactor.

It catalyses the reaction (S)-dihydroorotate + H2O = N-carbamoyl-L-aspartate + H(+). It participates in pyrimidine metabolism; UMP biosynthesis via de novo pathway; (S)-dihydroorotate from bicarbonate: step 3/3. Catalyzes the reversible cyclization of carbamoyl aspartate to dihydroorotate. In Klebsiella pneumoniae subsp. pneumoniae (strain ATCC 700721 / MGH 78578), this protein is Dihydroorotase.